Reading from the N-terminus, the 526-residue chain is NAD(P)H-quinone oxidoreductase chain 4 1 (526 aa).

14 consecutive transmembrane segments (helical) span residues 7–27 (FPWL…IPLL), 35–55 (WYAL…FGWH), 86–106 (LSFP…VAAW), 114–134 (LFFF…LAQD), 135–155 (LLLF…LIAI), 168–188 (FILY…AMAF), 208–228 (ALQI…LPVF), 242–262 (SAPI…YGLI), 276–296 (FAPV…LAAL), 310–330 (IAHM…GLNG), 331–351 (ALLQ…LTGI), 374–396 (AFAL…GFVG), 417–437 (GIAL…LSML), and 463–483 (MAVA…PRLA).

The protein belongs to the complex I subunit 4 family.

It is found in the cellular thylakoid membrane. It carries out the reaction a plastoquinone + NADH + (n+1) H(+)(in) = a plastoquinol + NAD(+) + n H(+)(out). The enzyme catalyses a plastoquinone + NADPH + (n+1) H(+)(in) = a plastoquinol + NADP(+) + n H(+)(out). In terms of biological role, NDH-1 shuttles electrons from NAD(P)H, via FMN and iron-sulfur (Fe-S) centers, to quinones in the respiratory chain. The immediate electron acceptor for the enzyme in this species is believed to be plastoquinone. Couples the redox reaction to proton translocation (for every two electrons transferred, four hydrogen ions are translocated across the cytoplasmic membrane), and thus conserves the redox energy in a proton gradient. This Synechococcus sp. (strain JA-3-3Ab) (Cyanobacteria bacterium Yellowstone A-Prime) protein is NAD(P)H-quinone oxidoreductase chain 4 1.